The following is a 197-amino-acid chain: Recombination protein RecR (197 aa).

A C4-type zinc finger spans residues 54 to 69; it reads CQQCNNYTEQTLCTLC. One can recognise a Toprim domain in the interval 77 to 172; that stretch reads TLLCVVESPA…NISQLAHGIP (96 aa).

Belongs to the RecR family.

May play a role in DNA repair. It seems to be involved in an RecBC-independent recombinational process of DNA repair. It may act with RecF and RecO. In Legionella pneumophila (strain Paris), this protein is Recombination protein RecR.